A 167-amino-acid chain; its full sequence is Keratin-associated protein 1-3 (167 aa).

This sequence belongs to the KRTAP type 1 family. In terms of assembly, interacts with hair keratins. In terms of tissue distribution, expressed in the middle/upper portions of the hair cortex, in the region termed the keratogenous zone.

In the hair cortex, hair keratin intermediate filaments are embedded in an interfilamentous matrix, consisting of hair keratin-associated proteins (KRTAP), which are essential for the formation of a rigid and resistant hair shaft through their extensive disulfide bond cross-linking with abundant cysteine residues of hair keratins. The matrix proteins include the high-sulfur and high-glycine-tyrosine keratins. This Homo sapiens (Human) protein is Keratin-associated protein 1-3 (KRTAP1-3).